Reading from the N-terminus, the 131-residue chain is Large ribosomal subunit protein eL14 (131 aa).

It belongs to the eukaryotic ribosomal protein eL14 family. Component of the large ribosomal subunit. Mature ribosomes consist of a small (40S) and a large (60S) subunit. The 40S subunit contains about 32 different proteins and 1 molecule of RNA (18S). The 60S subunit contains 45 different proteins and 3 molecules of RNA (25S, 5.8S and 5S).

It localises to the cytoplasm. Functionally, component of the ribosome, a large ribonucleoprotein complex responsible for the synthesis of proteins in the cell. The small ribosomal subunit (SSU) binds messenger RNAs (mRNAs) and translates the encoded message by selecting cognate aminoacyl-transfer RNA (tRNA) molecules. The large subunit (LSU) contains the ribosomal catalytic site termed the peptidyl transferase center (PTC), which catalyzes the formation of peptide bonds, thereby polymerizing the amino acids delivered by tRNAs into a polypeptide chain. The nascent polypeptides leave the ribosome through a tunnel in the LSU and interact with protein factors that function in enzymatic processing, targeting, and the membrane insertion of nascent chains at the exit of the ribosomal tunnel. The sequence is that of Large ribosomal subunit protein eL14 from Candida albicans (strain SC5314 / ATCC MYA-2876) (Yeast).